Here is a 151-residue protein sequence, read N- to C-terminus: uncharacterized protein (151 aa).

Positions 122–151 (GVAQRQVPTTGTHSFFHCTSEGNKEKPHHF) are disordered.

This is an uncharacterized protein from Homo sapiens (Human).